A 708-amino-acid chain; its full sequence is Ion-translocating oxidoreductase complex subunit C (708 aa).

4Fe-4S ferredoxin-type domains lie at 369–397 and 407–436; these read GEPQEEQSCIRCSACADACPADLLPQQLY and KATTHNIADCIECGACAWVCPSNIPLVQYF. 8 residues coordinate [4Fe-4S] cluster: C377, C380, C383, C387, C416, C419, C422, and C426. The interval 630-682 is disordered; sequence AKARKLEQQQANAEPEEQIDPRKAAVEAAIARAKARKLEQQQANAEPEEQIDP.

Belongs to the 4Fe4S bacterial-type ferredoxin family. RnfC subfamily. The complex is composed of six subunits: RsxA, RsxB, RsxC, RsxD, RsxE and RsxG. [4Fe-4S] cluster is required as a cofactor.

The protein localises to the cell inner membrane. Functionally, part of a membrane-bound complex that couples electron transfer with translocation of ions across the membrane. Required to maintain the reduced state of SoxR. The protein is Ion-translocating oxidoreductase complex subunit C of Escherichia coli (strain UTI89 / UPEC).